Reading from the N-terminus, the 493-residue chain is MSNYFNTLSLREKLGQLGKCRFMKREEFNDGCNFIKDWNIVIVGCGAQGLNQGLNMRDSGLNISYTLRDAAISEKRQSWQWATENGFTVGSYAELIPQADLVLNLTPDKQHTSAVTAVMPLMKQGATLAYSHGFNIVEEGMQIRSDITVVMVAPKCPGTEVREEYKRGFGVPTLIAVHPENDPQGNGLAIAKAYASATGGDRAGVLESSFIAEVKSDLMGEQTILCGMLQTAAVLGHKQLIAQGMDAAYARKLLQYGLETTTEGLKHGGITNMMDRLSNPAKILAFDMAEELKVILRPLFQKHMDDIIEGRFSATMMADWANDDVNLLTWRAETAETSFEKSPECDTEISEQEYYDKGIFVVAMIKAGVELAFDAMVDSGIINASAYYESLHETPLIANCIARNMLHEMNVVISDTAEYGNYLFTHAAVPLLADYTASLTLEQLGEGLKESSNNVDNARLIEVNEAIRSHGVEVIGKELRGYMTDMKKIASAK.

Residues 17–208 (LGKCRFMKRE…GGDRAGVLES (192 aa)) form the KARI N-terminal Rossmann domain. Residues 45-48 (CGAQ), Arg68, Arg76, Ser78, and 108-110 (DKQ) contribute to the NADP(+) site. Residue His132 is part of the active site. An NADP(+)-binding site is contributed by Gly158. KARI C-terminal knotted domains follow at residues 209–353 (SFIA…SEQE) and 354–486 (YYDK…MTDM). Mg(2+) is bound by residues Asp217, Glu221, Glu389, and Glu393. Ser414 contributes to the substrate binding site.

This sequence belongs to the ketol-acid reductoisomerase family. It depends on Mg(2+) as a cofactor.

The enzyme catalyses (2R)-2,3-dihydroxy-3-methylbutanoate + NADP(+) = (2S)-2-acetolactate + NADPH + H(+). It catalyses the reaction (2R,3R)-2,3-dihydroxy-3-methylpentanoate + NADP(+) = (S)-2-ethyl-2-hydroxy-3-oxobutanoate + NADPH + H(+). It participates in amino-acid biosynthesis; L-isoleucine biosynthesis; L-isoleucine from 2-oxobutanoate: step 2/4. It functions in the pathway amino-acid biosynthesis; L-valine biosynthesis; L-valine from pyruvate: step 2/4. In terms of biological role, involved in the biosynthesis of branched-chain amino acids (BCAA). Catalyzes an alkyl-migration followed by a ketol-acid reduction of (S)-2-acetolactate (S2AL) to yield (R)-2,3-dihydroxy-isovalerate. In the isomerase reaction, S2AL is rearranged via a Mg-dependent methyl migration to produce 3-hydroxy-3-methyl-2-ketobutyrate (HMKB). In the reductase reaction, this 2-ketoacid undergoes a metal-dependent reduction by NADPH to yield (R)-2,3-dihydroxy-isovalerate. The sequence is that of Ketol-acid reductoisomerase (NADP(+)) from Colwellia psychrerythraea (strain 34H / ATCC BAA-681) (Vibrio psychroerythus).